The sequence spans 311 residues: Short chain dehydrogenase opdN (311 aa).

NADP(+)-binding residues include Leu-48, Lys-73, Glu-96, Asn-123, Tyr-217, and Lys-221. Residue Tyr-217 is the Proton donor of the active site. Lys-221 acts as the Lowers pKa of active site Tyr in catalysis.

This sequence belongs to the short-chain dehydrogenases/reductases (SDR) family.

It participates in secondary metabolite biosynthesis. In terms of biological role, short chain dehydrogenase; part of the gene cluster that mediates the biosynthesis of oxopyrrolidines, polyketide-amino acid hybrid compounds with feature structures of tetramic acid. Does not seem to play a role in oxopyrrolidines A and B biosynthesis. May be involved in further modifications of these oxopyrrolidines. This Penicillium oxalicum (strain 114-2 / CGMCC 5302) (Penicillium decumbens) protein is Short chain dehydrogenase opdN.